We begin with the raw amino-acid sequence, 116 residues long: Large ribosomal subunit protein bL20 (116 aa).

This sequence belongs to the bacterial ribosomal protein bL20 family.

In terms of biological role, binds directly to 23S ribosomal RNA and is necessary for the in vitro assembly process of the 50S ribosomal subunit. It is not involved in the protein synthesizing functions of that subunit. The protein is Large ribosomal subunit protein bL20 of Helicobacter pylori (strain G27).